The chain runs to 284 residues: D-tagatose-1,6-bisphosphate aldolase subunit GatY (284 aa).

Asp-82 acts as the Proton donor in catalysis. Residues His-83 and His-180 each coordinate Zn(2+). Position 181 (Gly-181) interacts with dihydroxyacetone phosphate. A Zn(2+)-binding site is contributed by His-208. Dihydroxyacetone phosphate is bound by residues 209–211 (GAS) and 230–233 (NVAT).

It belongs to the class II fructose-bisphosphate aldolase family. TagBP aldolase GatY subfamily. In terms of assembly, forms a complex with GatZ. Requires Zn(2+) as cofactor.

It catalyses the reaction D-tagatofuranose 1,6-bisphosphate = D-glyceraldehyde 3-phosphate + dihydroxyacetone phosphate. Its pathway is carbohydrate metabolism; D-tagatose 6-phosphate degradation; D-glyceraldehyde 3-phosphate and glycerone phosphate from D-tagatose 6-phosphate: step 2/2. Catalytic subunit of the tagatose-1,6-bisphosphate aldolase GatYZ, which catalyzes the reversible aldol condensation of dihydroxyacetone phosphate (DHAP or glycerone-phosphate) with glyceraldehyde 3-phosphate (G3P) to produce tagatose 1,6-bisphosphate (TBP). Requires GatZ subunit for full activity and stability. Is involved in the catabolism of galactitol. This Escherichia coli O8 (strain IAI1) protein is D-tagatose-1,6-bisphosphate aldolase subunit GatY.